The primary structure comprises 370 residues: Sodium-dependent organic anion transporter (370 aa).

The disordered stretch occupies residues 1–24; that stretch reads MSADCEGNSTCPANSTEEDPPVGM. Residues 1 to 32 are Extracellular-facing; the sequence is MSADCEGNSTCPANSTEEDPPVGMEGQGSLKL. N-linked (GlcNAc...) asparagine glycosylation is found at Asn-8 and Asn-14. A helical membrane pass occupies residues 33–53; the sequence is VFTVLSAVMVGLVMFSFGCSV. Topologically, residues 54 to 67 are cytoplasmic; sequence ESRKLWLHLRRPWG. A helical membrane pass occupies residues 68-88; sequence IAVGLLCQFGLMPLTAYLLAI. The Extracellular segment spans residues 89-97; sequence GFGLKPFQA. A helical membrane pass occupies residues 98 to 118; the sequence is IAVLIMGSCPGGTVSNVLTFW. Over 119–126 the chain is Cytoplasmic; that stretch reads VDGDMDLS. The helical transmembrane segment at 127–147 threads the bilayer; the sequence is ISMTTCSTVAALGMMPLCLYV. The Extracellular segment spans residues 148–159; sequence YTRSWTLPQSLT. Residues 160 to 180 traverse the membrane as a helical segment; the sequence is IPYQSIGITLVSLVVPVASGI. The Cytoplasmic segment spans residues 181 to 195; that stretch reads YVNYRWPKQATFILK. The chain crosses the membrane as a helical span at residues 196–216; sequence VGAAVGGMLLLVVAVTGVVLA. Topologically, residues 217 to 224 are extracellular; it reads KGWNIDVT. Residues 225 to 245 traverse the membrane as a helical segment; the sequence is LLVISCIFPLVGHVMGFLLAF. Over 246–265 the chain is Cytoplasmic; it reads LTHQSWQRCRTISIETGAQN. Residues 266-283 form a helical membrane-spanning segment; that stretch reads IQLCIAMMQLSFSAEYLV. Gln-284 is a topological domain (extracellular). Residues 285–305 form a helical membrane-spanning segment; that stretch reads LLNFALAYGLFQVLHGLLIVA. Topologically, residues 306-370 are cytoplasmic; the sequence is AYQAYKRRQK…ELTSHVPSCE (65 aa).

It belongs to the bile acid:sodium symporter (BASS) (TC 2.A.28) family. Post-translationally, glycosylated. In terms of tissue distribution, highly expressed in heart, lung, spleen and adrenal gland. Moderately expressed in skeletal muscle, testis and small intestine.

It is found in the membrane. It catalyses the reaction estrone 3-sulfate(out) + 2 Na(+)(out) = estrone 3-sulfate(in) + 2 Na(+)(in). The enzyme catalyses 17beta-estradiol 3-sulfate(out) + 2 Na(+)(out) = 17beta-estradiol 3-sulfate(in) + 2 Na(+)(in). The catalysed reaction is dehydroepiandrosterone 3-sulfate(out) + 2 Na(+)(out) = dehydroepiandrosterone 3-sulfate(in) + 2 Na(+)(in). It carries out the reaction androst-5-ene-diol 3-sulfate(out) + 2 Na(+)(out) = androst-5-ene-diol 3-sulfate(in) + 2 Na(+)(in). It catalyses the reaction pregnenolone sulfate(out) + 2 Na(+)(out) = pregnenolone sulfate(in) + 2 Na(+)(in). The enzyme catalyses taurolithocholate 3-sulfate(out) + 2 Na(+)(out) = taurolithocholate 3-sulfate(in) + 2 Na(+)(in). The catalysed reaction is androsterone 3alpha-sulfate(out) + 2 Na(+)(out) = androsterone 3alpha-sulfate(in) + 2 Na(+)(in). It carries out the reaction 5alpha-dihydrotestosterone sulfate(out) + 2 Na(+)(out) = 5alpha-dihydrotestosterone sulfate(in) + 2 Na(+)(in). It catalyses the reaction 17beta-estradiol 17-sulfate(out) + 2 Na(+)(out) = 17beta-estradiol 17-sulfate(in) + 2 Na(+)(in). The enzyme catalyses 17alpha-hydroxypregnenolone 3-sulfate(out) + 2 Na(+)(out) = 17alpha-hydroxypregnenolone 3-sulfate(in) + 2 Na(+)(in). The catalysed reaction is epiandrosterone 3-sulfate(out) + 2 Na(+)(out) = epiandrosterone 3-sulfate(in) + 2 Na(+)(in). It carries out the reaction epitestosterone 17-sulfate(out) + 2 Na(+)(out) = epitestosterone 17-sulfate(in) + 2 Na(+)(in). It catalyses the reaction testosterone 17-sulfate(out) + 2 Na(+)(out) = testosterone 17-sulfate(in) + 2 Na(+)(in). The enzyme catalyses 16alpha-hydroxydehydroepiandrosterone 3-sulfate(out) + 2 Na(+)(out) = 16alpha-hydroxydehydroepiandrosterone 3-sulfate(in) + 2 Na(+)(in). Its function is as follows. Transports sulfoconjugated steroid hormones from the extracellular compartment into the cytosol in a sodium-dependent manner without hydrolysis. Steroid sulfate hormones are commonly considered to be biologically inactive metabolites, that may be activated by steroid sulfatases into free steroids. May play an important role by delivering sulfoconjugated steroids to specific target cells in reproductive organs. May play a role transporting the estriol precursor 16alpha-hydroxydehydroepiandrosterone 3-sulfate (16a-OH-DHEAS) at the fetal blood vessel endothelium. Can also transport other sulfoconjugated molecules such as taurolithocholic acid-3-sulfate and sulfoconjugated pyrenes. The chain is Sodium-dependent organic anion transporter (Slc10a6) from Rattus norvegicus (Rat).